We begin with the raw amino-acid sequence, 238 residues long: Lipoarabinomannan carrier protein LprG (238 aa).

The first 26 residues, 1 to 26, serve as a signal peptide directing secretion; it reads MQAPKHHRRLFAVLATLNTATAVIAG. The N-palmitoyl cysteine moiety is linked to residue C27. Residue C27 is the site of S-diacylglycerol cysteine attachment.

The protein belongs to the LppX/LprAFG lipoprotein family. In terms of processing, modified by Lgt on Cys-27 with an S-linked diacylglyceral, signal peptide is removed by LspA, Cys-27 is further modifed with a fatty acid on its amino group by Lnt yielding a triacylated protein. Probably glycosylated, which is required for T-cell activation.

Its subcellular location is the cell inner membrane. The protein localises to the secreted. The protein resides in the cell wall. Its function is as follows. Helps membrane protein ML0556 (P55) transport triacylglycerides (TAG) across the inner cell membrane into the periplasm and probably ultimately to the outer membrane. Binds TAG in its hydrophobic cavity and transfers it between lipid bilayers. TAG probably regulates lipid metabolism and growth regulation and plays a structural role in the outer membrane. Binds di- and triacylated phosphatidyl-myo-inositol mannosides (PIMs), and glycolipid lipoglycan modulins lipoarabinomannan (LAM) and lipomannan (LM), facilitating their recognition by TLR2. Required for activity of drug efflux transporter ML0556. Required, probably with ML0556, for normal surface localization of LAM. Functionally, constitutes a host TLR2 agonist (toll-like receptor) able to stimulate proliferation of CD4+ T-cells derived from a human leprosy patient following protein processing/presentation by MHC class II molecules in peripheral blood mononuclear cells. This is Lipoarabinomannan carrier protein LprG from Mycobacterium leprae (strain TN).